A 449-amino-acid polypeptide reads, in one-letter code: N-succinylarginine dihydrolase (449 aa).

Substrate-binding positions include 19–28 (GGLSYGNVAS), Asn110, and 137–138 (HR). The interval 23-43 (YGNVASQSNSQQGSNPREAAR) is disordered. The span at 25–37 (NVASQSNSQQGSN) shows a compositional bias: polar residues. Residue Glu174 is part of the active site. Arg214 lines the substrate pocket. Residue His250 is part of the active site. Substrate contacts are provided by Asp252 and Asn365. Cys371 serves as the catalytic Nucleophile.

It belongs to the succinylarginine dihydrolase family. As to quaternary structure, homodimer.

The enzyme catalyses N(2)-succinyl-L-arginine + 2 H2O + 2 H(+) = N(2)-succinyl-L-ornithine + 2 NH4(+) + CO2. It participates in amino-acid degradation; L-arginine degradation via AST pathway; L-glutamate and succinate from L-arginine: step 2/5. Its function is as follows. Catalyzes the hydrolysis of N(2)-succinylarginine into N(2)-succinylornithine, ammonia and CO(2). The protein is N-succinylarginine dihydrolase of Pseudomonas entomophila (strain L48).